We begin with the raw amino-acid sequence, 344 residues long: 2-aminoethylphosphonate--pyruvate transaminase (344 aa).

Lys-194 is subject to N6-(pyridoxal phosphate)lysine.

Belongs to the class-V pyridoxal-phosphate-dependent aminotransferase family. PhnW subfamily. Homodimer. The cofactor is pyridoxal 5'-phosphate.

The enzyme catalyses (2-aminoethyl)phosphonate + pyruvate = phosphonoacetaldehyde + L-alanine. In terms of biological role, involved in phosphonate degradation. In Bacillus cereus, this protein is 2-aminoethylphosphonate--pyruvate transaminase.